A 370-amino-acid polypeptide reads, in one-letter code: Quinolinate synthase (370 aa).

Iminosuccinate-binding residues include His62 and Ser83. Cys128 provides a ligand contact to [4Fe-4S] cluster. Iminosuccinate contacts are provided by residues 154–156 (YAN) and Ser171. Residue Cys215 participates in [4Fe-4S] cluster binding. Iminosuccinate-binding positions include 241 to 243 (HPE) and Thr258. A [4Fe-4S] cluster-binding site is contributed by Cys312.

It belongs to the quinolinate synthase family. Type 1 subfamily. [4Fe-4S] cluster serves as cofactor.

It is found in the cytoplasm. The enzyme catalyses iminosuccinate + dihydroxyacetone phosphate = quinolinate + phosphate + 2 H2O + H(+). Its pathway is cofactor biosynthesis; NAD(+) biosynthesis; quinolinate from iminoaspartate: step 1/1. Its function is as follows. Catalyzes the condensation of iminoaspartate with dihydroxyacetone phosphate to form quinolinate. The chain is Quinolinate synthase from Neisseria meningitidis serogroup B (strain ATCC BAA-335 / MC58).